The chain runs to 512 residues: ATP synthase subunit alpha, chloroplastic (512 aa).

ATP is bound at residue 170–177; the sequence is GDRQTGKT.

The protein belongs to the ATPase alpha/beta chains family. As to quaternary structure, F-type ATPases have 2 components, CF(1) - the catalytic core - and CF(0) - the membrane proton channel. CF(1) has five subunits: alpha(3), beta(3), gamma(1), delta(1), epsilon(1). CF(0) has four main subunits: a, b, b' and c.

It localises to the plastid. The protein resides in the chloroplast thylakoid membrane. The catalysed reaction is ATP + H2O + 4 H(+)(in) = ADP + phosphate + 5 H(+)(out). Functionally, produces ATP from ADP in the presence of a proton gradient across the membrane. The alpha chain is a regulatory subunit. In Chaetosphaeridium globosum (Charophycean green alga), this protein is ATP synthase subunit alpha, chloroplastic.